The chain runs to 408 residues: Substance-P receptor (408 aa).

The Extracellular portion of the chain corresponds to 1-32; the sequence is MNSNISAQNDSALNSTIQNGTKINQFIQPPWQ. Asn4, Asn9, Asn14, and Asn19 each carry an N-linked (GlcNAc...) asparagine glycan. A helical membrane pass occupies residues 33 to 55; the sequence is IALWSVAYSIIVIVSLVGNIIVM. Residues 56-65 lie on the Cytoplasmic side of the membrane; the sequence is WIIIAHKRMR. A helical membrane pass occupies residues 66–87; it reads TVTNYFLVNLAFAEASMSAFNT. The Extracellular portion of the chain corresponds to 88-107; sequence VINFTYAIHNHWYYGLIYCK. A disulfide bridge links Cys106 with Cys181. The helical transmembrane segment at 108 to 129 threads the bilayer; that stretch reads FHNFFPISAVFTSIYSMTAIAL. Over 130-149 the chain is Cytoplasmic; that stretch reads DRYMAIIHPLKPRLSATATK. Residues 150-170 traverse the membrane as a helical segment; the sequence is IVICVIWSFSFCMAFPLGYYA. The Extracellular segment spans residues 171–196; that stretch reads DVYPMEGGDICYLNWPDSEENRKYEQ. Residues 197–221 form a helical membrane-spanning segment; it reads VYQVLVFCLIYILPLLVIGCAYTFI. Over 222–250 the chain is Cytoplasmic; the sequence is GMTLWASEIPGDSSDRYHEQVVAKRKVVK. The chain crosses the membrane as a helical span at residues 251–272; that stretch reads MMIVVVCTFAICWLPFHIFFLL. Residues 273 to 283 lie on the Extracellular side of the membrane; sequence QTLHEMTQKFY. A helical transmembrane segment spans residues 284–308; that stretch reads QQFYLAIMWLAMSSTMYNPIIYCCL. Residues 309–408 lie on the Cytoplasmic side of the membrane; sequence NDRFRIGFKH…SSSFYSNNLA (100 aa). Cys323 is lipidated: S-palmitoyl cysteine. A disordered region spans residues 366–408; it reads DEEAEENGKSSKRLSLDLTSNGSSRSVCKTMSDSSSFYSNNLA. Residues 382–408 show a composition bias toward polar residues; it reads DLTSNGSSRSVCKTMSDSSSFYSNNLA.

It belongs to the G-protein coupled receptor 1 family.

It localises to the cell membrane. Its function is as follows. This is a receptor for the tachykinin neuropeptide substance P. It is probably associated with G proteins that activate a phosphatidylinositol-calcium second messenger system. The protein is Substance-P receptor (TACR1) of Aquarana catesbeiana (American bullfrog).